Here is a 521-residue protein sequence, read N- to C-terminus: Glucose-6-phosphate isomerase (521 aa).

Glutamate 327 serves as the catalytic Proton donor. Active-site residues include histidine 358 and lysine 486.

The protein belongs to the GPI family.

It localises to the cytoplasm. The enzyme catalyses alpha-D-glucose 6-phosphate = beta-D-fructose 6-phosphate. The protein operates within carbohydrate biosynthesis; gluconeogenesis. Its pathway is carbohydrate degradation; glycolysis; D-glyceraldehyde 3-phosphate and glycerone phosphate from D-glucose: step 2/4. In terms of biological role, catalyzes the reversible isomerization of glucose-6-phosphate to fructose-6-phosphate. The protein is Glucose-6-phosphate isomerase of Bordetella petrii (strain ATCC BAA-461 / DSM 12804 / CCUG 43448).